A 688-amino-acid chain; its full sequence is Potassium-transporting ATPase ATP-binding subunit (688 aa).

4 helical membrane passes run 35-55, 62-82, 219-239, and 260-280; these read VMFV…QALG, AGFI…ANFA, IALT…IVTL, and VLIA…LSAI. Asp-313 acts as the 4-aspartylphosphate intermediate in catalysis. ATP is bound by residues Asp-350, Glu-354, 383–390, and Lys-401; that span reads FSAHTRMS. Asp-524 and Asp-528 together coordinate Mg(2+). Transmembrane regions (helical) follow at residues 594–614, 622–642, and 668–688; these read FAII…LNVM, AILS…PLAL, and VIVP…VGLA.

It belongs to the cation transport ATPase (P-type) (TC 3.A.3) family. Type IA subfamily. The system is composed of three essential subunits: KdpA, KdpB and KdpC.

It is found in the cell inner membrane. It carries out the reaction K(+)(out) + ATP + H2O = K(+)(in) + ADP + phosphate + H(+). Functionally, part of the high-affinity ATP-driven potassium transport (or Kdp) system, which catalyzes the hydrolysis of ATP coupled with the electrogenic transport of potassium into the cytoplasm. This subunit is responsible for energy coupling to the transport system and for the release of the potassium ions to the cytoplasm. The sequence is that of Potassium-transporting ATPase ATP-binding subunit from Dechloromonas aromatica (strain RCB).